A 443-amino-acid chain; its full sequence is Xaa-Pro dipeptidase (443 aa).

5 residues coordinate Mn(2+): aspartate 246, aspartate 257, histidine 339, glutamate 384, and glutamate 423.

The protein belongs to the peptidase M24B family. Bacterial-type prolidase subfamily. Requires Mn(2+) as cofactor.

It carries out the reaction Xaa-L-Pro dipeptide + H2O = an L-alpha-amino acid + L-proline. In terms of biological role, splits dipeptides with a prolyl residue in the C-terminal position. This Salmonella paratyphi B (strain ATCC BAA-1250 / SPB7) protein is Xaa-Pro dipeptidase.